The primary structure comprises 71 residues: Small ribosomal subunit protein bS21 (71 aa).

Basic residues predominate over residues 50–59 (AAAVKRHAKK). Positions 50 to 71 (AAAVKRHAKKVQREQRRAVRLY) are disordered. Positions 60-71 (VQREQRRAVRLY) are enriched in basic and acidic residues.

It belongs to the bacterial ribosomal protein bS21 family.

The protein is Small ribosomal subunit protein bS21 of Pseudomonas entomophila (strain L48).